Consider the following 344-residue polypeptide: tRNA N6-adenosine threonylcarbamoyltransferase (344 aa).

His-119 and His-123 together coordinate Fe cation. Residues 141-145 (VVSGG), Asp-174, Gly-187, Asp-191, and Asn-280 contribute to the substrate site. Asp-310 serves as a coordination point for Fe cation.

This sequence belongs to the KAE1 / TsaD family. Fe(2+) is required as a cofactor.

Its subcellular location is the cytoplasm. The enzyme catalyses L-threonylcarbamoyladenylate + adenosine(37) in tRNA = N(6)-L-threonylcarbamoyladenosine(37) in tRNA + AMP + H(+). Functionally, required for the formation of a threonylcarbamoyl group on adenosine at position 37 (t(6)A37) in tRNAs that read codons beginning with adenine. Is involved in the transfer of the threonylcarbamoyl moiety of threonylcarbamoyl-AMP (TC-AMP) to the N6 group of A37, together with TsaE and TsaB. TsaD likely plays a direct catalytic role in this reaction. This is tRNA N6-adenosine threonylcarbamoyltransferase from Listeria monocytogenes serovar 1/2a (strain ATCC BAA-679 / EGD-e).